Consider the following 314-residue polypeptide: tRNA dimethylallyltransferase 2 (314 aa).

8–15 (GPTGSGKS) lines the ATP pocket. 10–15 (TGSGKS) serves as a coordination point for substrate.

Belongs to the IPP transferase family. In terms of assembly, monomer. Mg(2+) serves as cofactor.

The enzyme catalyses adenosine(37) in tRNA + dimethylallyl diphosphate = N(6)-dimethylallyladenosine(37) in tRNA + diphosphate. Functionally, catalyzes the transfer of a dimethylallyl group onto the adenine at position 37 in tRNAs that read codons beginning with uridine, leading to the formation of N6-(dimethylallyl)adenosine (i(6)A). In Mycobacterium marinum (strain ATCC BAA-535 / M), this protein is tRNA dimethylallyltransferase 2.